The chain runs to 625 residues: DELLA protein SLR1 (625 aa).

The disordered stretch occupies residues 1-34 (MKREYQEAGGSSGGGSSADMGSCKDKVMAGAAGE). The short motif at 39 to 43 (DELLA) is the DELLA motif element. The disordered stretch occupies residues 167–209 (TADPSAADSARDTKRMRTGGGSTSSSSSSSSSLGGGASRGSVV). The span at 189–198 (TSSSSSSSSS) shows a compositional bias: low complexity. Positions 232–621 (VDTQEAGIRL…RPLIATSAWR (390 aa)) constitute a GRAS domain. The segment at 239–294 (IRLVHALLACAEAVQQENFAAAEALVKQIPTLAASQGGAMRKVAAYFGEALARRVY) is leucine repeat I (LRI). Positions 241–278 (LVHALLACAEAVQQENFAAAEALVKQIPTLAASQGGAM) are required for possible homodimerization. Positions 246–250 (LACAE) match the LxCxE motif motif. Residues 313 to 378 (HAHFYESCPY…GGPPSFRLTG (66 aa)) form a VHIID region. The VHIID motif lies at 344-348 (VHVVD). The segment at 392 to 431 (QVGWKLAQFAHTIRVDFQYRGLVAATLADLEPFMLQPEGE) is leucine repeat II (LRII). Residues 441-542 (IAVNSVFELH…EVYLGRQICN (102 aa)) are PFYRE. Positions 449-453 (LHRLL) match the LXXLL motif motif. The tract at residues 545–621 (ACEGAERTER…RPLIATSAWR (77 aa)) is SAW.

Belongs to the GRAS family. DELLA subfamily. In terms of assembly, may be a homodimer. Interacts directly with the GID2 component of the SCF(GID2) complex. Interacts with GID1 in a GA-dependent manner, probably leading to its interaction with GID2 and its subsequent degradation. Interacts with D14 and GID1 in an strigolactone-dependent manner. Interacts with HD16/EL1. In terms of processing, phosphorylated on Ser/Thr residues in the N-terminal part. Both phosphorylated and unphosphorylated forms are degraded upon GA treatment, suggesting that phosphorylation does not trigger ubiquitination. Phosphorylated by HD16/EL1. Phosphorylation enhances its stability. Post-translationally, ubiquitinated. Upon GA application it is ubiquitinated by the SCF(GID2) complex, leading to its subsequent degradation. In terms of tissue distribution, expressed in nodes, internodes, leaf sheats of young seedlings and ears of adult plants. Weakly expressed in leaf blade and root.

It is found in the nucleus. Functionally, probable transcriptional regulator that acts as a repressor of the gibberellin (GA) signaling pathway. Probably acts by participating in large multiprotein complexes that repress transcription of GA-inducible genes. Upon GA application, it is degraded by the proteasome, allowing the GA signaling pathway. In contrast, its overexpression prevents the GA signaling pathway and induces a dwarf phenotype. The polypeptide is DELLA protein SLR1 (Oryza sativa subsp. japonica (Rice)).